Consider the following 262-residue polypeptide: 5'-nucleotidase SurE (262 aa).

4 residues coordinate a divalent metal cation: Asp-11, Asp-12, Ser-43, and Asn-101.

The protein belongs to the SurE nucleotidase family. A divalent metal cation serves as cofactor.

The protein localises to the cytoplasm. The enzyme catalyses a ribonucleoside 5'-phosphate + H2O = a ribonucleoside + phosphate. Functionally, nucleotidase that shows phosphatase activity on nucleoside 5'-monophosphates. The sequence is that of 5'-nucleotidase SurE from Prochlorococcus marinus (strain NATL1A).